A 345-amino-acid polypeptide reads, in one-letter code: Adenine deaminase (345 aa).

His20, His22, and His204 together coordinate Zn(2+). Glu207 (proton donor) is an active-site residue. Asp285 is a binding site for Zn(2+). Asp286 is a binding site for substrate.

This sequence belongs to the metallo-dependent hydrolases superfamily. Adenosine and AMP deaminases family. Adenine deaminase type 2 subfamily. Zn(2+) is required as a cofactor.

The enzyme catalyses adenine + H2O + H(+) = hypoxanthine + NH4(+). Functionally, catalyzes the hydrolytic deamination of adenine to hypoxanthine. Plays an important role in the purine salvage pathway and in nitrogen catabolism. This is Adenine deaminase from Ralstonia nicotianae (strain ATCC BAA-1114 / GMI1000) (Ralstonia solanacearum).